A 68-amino-acid chain; its full sequence is SERF-like protein YDL085C-A (68 aa).

Basic and acidic residues-rich tracts occupy residues 1–43 (MARG…EILR) and 50–68 (DARR…KTRR). Residues 1–68 (MARGNQRDLA…EKLKAEKTRR (68 aa)) are disordered. Ser37 carries the phosphoserine modification.

It belongs to the SERF family.

The protein localises to the cytoplasm. It localises to the nucleus. This chain is SERF-like protein YDL085C-A, found in Saccharomyces cerevisiae (strain ATCC 204508 / S288c) (Baker's yeast).